We begin with the raw amino-acid sequence, 418 residues long: D-amino acid dehydrogenase 1 (418 aa).

3-17 (IMVLGGGVIGVTTAY) is a binding site for FAD.

The protein belongs to the DadA oxidoreductase family. Requires FAD as cofactor.

The catalysed reaction is a D-alpha-amino acid + A + H2O = a 2-oxocarboxylate + AH2 + NH4(+). The protein operates within amino-acid degradation; D-alanine degradation; NH(3) and pyruvate from D-alanine: step 1/1. In terms of biological role, oxidative deamination of D-amino acids. The polypeptide is D-amino acid dehydrogenase 1 (dadA1) (Mesorhizobium japonicum (strain LMG 29417 / CECT 9101 / MAFF 303099) (Mesorhizobium loti (strain MAFF 303099))).